We begin with the raw amino-acid sequence, 25 residues long: GLWSKIKEAAKTAGKAAMGFVNEMV.

Val25 carries the post-translational modification Valine amide.

In terms of tissue distribution, expressed by the skin glands.

It is found in the secreted. Its function is as follows. Has antimicrobial activity. The chain is Dermaseptin-5.1TR from Phyllomedusa trinitatis (Trinidad leaf frog).